Here is a 210-residue protein sequence, read N- to C-terminus: T-cell surface glycoprotein CD8 beta chain (210 aa).

An N-terminal signal peptide occupies residues 1–21 (MQPGLWLLLATQLAALRGSSV). Residues 22–132 (LQQAPGSVMV…ELTFGKGTRL (111 aa)) enclose the Ig-like V-type domain. Over 22–170 (LQQAPGSVMV…VTQKGPSCGL (149 aa)) the chain is Extracellular. C41 and C116 are oxidised to a cystine. An N-linked (GlcNAc...) asparagine glycan is attached at N102. The segment at 139 to 161 (PTNSQPTKKPTPRKKMCRPPSPV) is disordered. Residues 171–191 (LTLGLLVAGVLVLLVSLGVAI) form a helical membrane-spanning segment. The Cytoplasmic segment spans residues 192–210 (HLYRLKRRARLRLLKQFYK).

In terms of assembly, forms disulfide-linked heterodimers with CD8A at the cell surface. Interacts with CD3D; this interaction couples TCR-CD3 with CD8. Interacts with LCK. Phosphorylated as a consequence of T-cell activation. Post-translationally, palmitoylated at the cytoplasmic tail and thereby targets the heterodimer CD8A/CD8B to lipid rafts unlike CD8A homodimers.

The protein localises to the cell membrane. In terms of biological role, integral membrane glycoprotein that plays an essential role in the immune response and serves multiple functions in responses against both external and internal offenses. In T-cells, functions primarily as a coreceptor for MHC class I molecule:peptide complex. The antigens presented by class I peptides are derived from cytosolic proteins while class II derived from extracellular proteins. Interacts simultaneously with the T-cell receptor (TCR) and the MHC class I proteins presented by antigen presenting cells (APCs). In turn, recruits the Src kinase LCK to the vicinity of the TCR-CD3 complex. A palmitoylation site in the cytoplasmic tail of CD8B chain contributes to partitioning of CD8 into the plasma membrane lipid rafts where signaling proteins are enriched. Once LCK recruited, it initiates different intracellular signaling pathways by phosphorylating various substrates ultimately leading to lymphokine production, motility, adhesion and activation of cytotoxic T-lymphocytes (CTLs). Additionally, plays a critical role in thymic selection of CD8+ T-cells. The chain is T-cell surface glycoprotein CD8 beta chain (CD8B) from Felis catus (Cat).